The sequence spans 205 residues: RNA pyrophosphohydrolase (205 aa).

One can recognise a Nudix hydrolase domain in the interval 6-149; sequence GFRPNVGIVL…KRGVYARALR (144 aa). The short motif at 38 to 59 is the Nudix box element; sequence GGMNTDETPVEAMYRELREETG. Positions 178-205 are disordered; the sequence is GSSAAGHDRPRKRPRKRGGVLPVRINND. The span at 186 to 195 shows a compositional bias: basic residues; it reads RPRKRPRKRG.

Belongs to the Nudix hydrolase family. RppH subfamily. Requires a divalent metal cation as cofactor.

Its function is as follows. Accelerates the degradation of transcripts by removing pyrophosphate from the 5'-end of triphosphorylated RNA, leading to a more labile monophosphorylated state that can stimulate subsequent ribonuclease cleavage. The sequence is that of RNA pyrophosphohydrolase from Xanthomonas campestris pv. campestris (strain 8004).